We begin with the raw amino-acid sequence, 352 residues long: Zona pellucida-binding protein 2 (352 aa).

Positions 1 to 28 (MAGGGGRPCSPQRALLGMVAIMAVVAEA) are cleaved as a signal peptide. N-linked (GlcNAc...) asparagine glycans are attached at residues N110 and N309.

The protein belongs to the zona pellucida-binding protein Sp38 family.

It localises to the secreted. Its subcellular location is the cytoplasmic vesicle. It is found in the secretory vesicle. The protein resides in the acrosome. May be implicated in the gamete interaction during fertilization. The polypeptide is Zona pellucida-binding protein 2 (ZPBP2) (Gallus gallus (Chicken)).